A 329-amino-acid polypeptide reads, in one-letter code: DNA-directed RNA polymerase subunit alpha (329 aa).

The alpha N-terminal domain (alpha-NTD) stretch occupies residues 1–234; sequence MQGSVTEFLK…EQLDAFVELR (234 aa). Positions 248-329 are alpha C-terminal domain (alpha-CTD); the sequence is FDPILLRPVD…WPPASLADDL (82 aa).

This sequence belongs to the RNA polymerase alpha chain family. As to quaternary structure, homodimer. The RNAP catalytic core consists of 2 alpha, 1 beta, 1 beta' and 1 omega subunit. When a sigma factor is associated with the core the holoenzyme is formed, which can initiate transcription.

It catalyses the reaction RNA(n) + a ribonucleoside 5'-triphosphate = RNA(n+1) + diphosphate. Functionally, DNA-dependent RNA polymerase catalyzes the transcription of DNA into RNA using the four ribonucleoside triphosphates as substrates. In Shewanella amazonensis (strain ATCC BAA-1098 / SB2B), this protein is DNA-directed RNA polymerase subunit alpha.